The following is a 208-amino-acid chain: Putative 3-methyladenine DNA glycosylase (208 aa).

This sequence belongs to the DNA glycosylase MPG family.

The chain is Putative 3-methyladenine DNA glycosylase from Prosthecochloris aestuarii (strain DSM 271 / SK 413).